Consider the following 197-residue polypeptide: Putative RNA polymerase II subunit B1 CTD phosphatase rtr1 (197 aa).

An RTR1-type zinc finger spans residues 60 to 139 (EARKYLRKSD…LSDEPLWIRE (80 aa)). Zn(2+)-binding residues include cysteine 83, cysteine 88, cysteine 115, and cysteine 119.

This sequence belongs to the RPAP2 family.

The protein localises to the cytoplasm. The protein resides in the nucleus. It carries out the reaction O-phospho-L-seryl-[protein] + H2O = L-seryl-[protein] + phosphate. The enzyme catalyses O-phospho-L-threonyl-[protein] + H2O = L-threonyl-[protein] + phosphate. In terms of biological role, putative RNA polymerase II subunit B1 C-terminal domain (CTD) phosphatase involved in RNA polymerase II transcription regulation. The protein is Putative RNA polymerase II subunit B1 CTD phosphatase rtr1 of Schizosaccharomyces pombe (strain 972 / ATCC 24843) (Fission yeast).